Here is a 529-residue protein sequence, read N- to C-terminus: Bifunctional purine biosynthesis protein PurH (529 aa).

The region spanning 1–148 is the MGS-like domain; the sequence is MQQRRPVRRA…KNHKDVAIVV (148 aa). K287 is subject to N6-acetyllysine.

It belongs to the PurH family.

It carries out the reaction (6R)-10-formyltetrahydrofolate + 5-amino-1-(5-phospho-beta-D-ribosyl)imidazole-4-carboxamide = 5-formamido-1-(5-phospho-D-ribosyl)imidazole-4-carboxamide + (6S)-5,6,7,8-tetrahydrofolate. It catalyses the reaction IMP + H2O = 5-formamido-1-(5-phospho-D-ribosyl)imidazole-4-carboxamide. It participates in purine metabolism; IMP biosynthesis via de novo pathway; 5-formamido-1-(5-phospho-D-ribosyl)imidazole-4-carboxamide from 5-amino-1-(5-phospho-D-ribosyl)imidazole-4-carboxamide (10-formyl THF route): step 1/1. It functions in the pathway purine metabolism; IMP biosynthesis via de novo pathway; IMP from 5-formamido-1-(5-phospho-D-ribosyl)imidazole-4-carboxamide: step 1/1. The polypeptide is Bifunctional purine biosynthesis protein PurH (Escherichia coli (strain 55989 / EAEC)).